Here is a 118-residue protein sequence, read N- to C-terminus: Holo-[acyl-carrier-protein] synthase (118 aa).

Mg(2+) is bound by residues Asp-8 and Glu-58.

This sequence belongs to the P-Pant transferase superfamily. AcpS family. The cofactor is Mg(2+).

The protein resides in the cytoplasm. It catalyses the reaction apo-[ACP] + CoA = holo-[ACP] + adenosine 3',5'-bisphosphate + H(+). Functionally, transfers the 4'-phosphopantetheine moiety from coenzyme A to a Ser of acyl-carrier-protein. This chain is Holo-[acyl-carrier-protein] synthase, found in Listeria monocytogenes serotype 4a (strain HCC23).